The chain runs to 774 residues: Ion-translocating oxidoreductase complex subunit C (774 aa).

4Fe-4S ferredoxin-type domains are found at residues 359 to 389 (ELPE…QQLH) and 399 to 428 (QLLA…VQYY). Residues Cys-369, Cys-372, Cys-375, Cys-379, Cys-408, Cys-411, Cys-414, and Cys-418 each contribute to the [4Fe-4S] cluster site. A compositionally biased stretch (basic and acidic residues) spans 453-490 (EQRQARLRRDEERRAAERAQRAEKAALARAAQAEREEA). Residues 453–493 (EQRQARLRRDEERRAAERAQRAEKAALARAAQAEREEAAPA) are disordered.

Belongs to the 4Fe4S bacterial-type ferredoxin family. RnfC subfamily. The complex is composed of six subunits: RnfA, RnfB, RnfC, RnfD, RnfE and RnfG. [4Fe-4S] cluster serves as cofactor.

The protein localises to the cell inner membrane. Its function is as follows. Part of a membrane-bound complex that couples electron transfer with translocation of ions across the membrane. This chain is Ion-translocating oxidoreductase complex subunit C, found in Pseudomonas aeruginosa (strain ATCC 15692 / DSM 22644 / CIP 104116 / JCM 14847 / LMG 12228 / 1C / PRS 101 / PAO1).